The primary structure comprises 386 residues: Succinate--CoA ligase [ADP-forming] subunit beta (386 aa).

In terms of domain architecture, ATP-grasp spans 9 to 244; that stretch reads KELFANYGVP…LDEEEPLEVE (236 aa). Residues K46, 53 to 55, E99, L102, and E107 each bind ATP; that span reads GRG. Mg(2+)-binding residues include N199 and D213. Substrate contacts are provided by residues N264 and 321 to 323; that span reads GIL.

It belongs to the succinate/malate CoA ligase beta subunit family. As to quaternary structure, heterotetramer of two alpha and two beta subunits. Requires Mg(2+) as cofactor.

The enzyme catalyses succinate + ATP + CoA = succinyl-CoA + ADP + phosphate. The catalysed reaction is GTP + succinate + CoA = succinyl-CoA + GDP + phosphate. It participates in carbohydrate metabolism; tricarboxylic acid cycle; succinate from succinyl-CoA (ligase route): step 1/1. Its function is as follows. Succinyl-CoA synthetase functions in the citric acid cycle (TCA), coupling the hydrolysis of succinyl-CoA to the synthesis of either ATP or GTP and thus represents the only step of substrate-level phosphorylation in the TCA. The beta subunit provides nucleotide specificity of the enzyme and binds the substrate succinate, while the binding sites for coenzyme A and phosphate are found in the alpha subunit. This is Succinate--CoA ligase [ADP-forming] subunit beta from Desulfatibacillum aliphaticivorans.